A 333-amino-acid polypeptide reads, in one-letter code: Endo-1,4-beta-xylanase (333 aa).

A signal peptide spans 1-17; sequence MYLVAFMLLAILPTGYC. In terms of domain architecture, GH10 spans 18 to 330; it reads QLNTLAVRAG…KPAYQGIVDG (313 aa). Catalysis depends on glutamate 147, which acts as the Proton donor. The Nucleophile role is filled by glutamate 252.

The protein belongs to the glycosyl hydrolase 10 (cellulase F) family.

The protein localises to the secreted. It catalyses the reaction Endohydrolysis of (1-&gt;4)-beta-D-xylosidic linkages in xylans.. The protein operates within glycan degradation; xylan degradation. Has xylanase activity. Seems to be involved in the release of sugars from the hemicellulolytic fraction in the compost. This chain is Endo-1,4-beta-xylanase (xlnA), found in Agaricus bisporus (White button mushroom).